A 522-amino-acid chain; its full sequence is Peptide chain release factor 3 (522 aa).

The tr-type G domain occupies Lys9–Gln276. GTP-binding positions include Ser18–Thr25, Asp86–His90, and Asn140–Asp143.

The protein belongs to the TRAFAC class translation factor GTPase superfamily. Classic translation factor GTPase family. PrfC subfamily.

Its subcellular location is the cytoplasm. Its function is as follows. Increases the formation of ribosomal termination complexes and stimulates activities of RF-1 and RF-2. It binds guanine nucleotides and has strong preference for UGA stop codons. It may interact directly with the ribosome. The stimulation of RF-1 and RF-2 is significantly reduced by GTP and GDP, but not by GMP. In Lactobacillus johnsonii (strain CNCM I-12250 / La1 / NCC 533), this protein is Peptide chain release factor 3.